A 432-amino-acid chain; its full sequence is Glutamyl-tRNA reductase (432 aa).

Residues 49-52 (TCNR), Ser101, 106-108 (EPQ), and Gln112 each bind substrate. The Nucleophile role is filled by Cys50. 181–186 (GAGETI) provides a ligand contact to NADP(+). The tract at residues 408–432 (PEKPGYRHPPVATPIVRTDDANPAP) is disordered.

This sequence belongs to the glutamyl-tRNA reductase family. Homodimer.

The enzyme catalyses (S)-4-amino-5-oxopentanoate + tRNA(Glu) + NADP(+) = L-glutamyl-tRNA(Glu) + NADPH + H(+). Its pathway is porphyrin-containing compound metabolism; protoporphyrin-IX biosynthesis; 5-aminolevulinate from L-glutamyl-tRNA(Glu): step 1/2. Its function is as follows. Catalyzes the NADPH-dependent reduction of glutamyl-tRNA(Glu) to glutamate 1-semialdehyde (GSA). The chain is Glutamyl-tRNA reductase from Xanthomonas campestris pv. campestris (strain B100).